Reading from the N-terminus, the 318-residue chain is Ribonuclease Z (318 aa).

Residues His-62, His-64, Asp-66, His-67, His-140, Asp-211, and His-269 each contribute to the Zn(2+) site. Asp-66 (proton acceptor) is an active-site residue.

It belongs to the RNase Z family. In terms of assembly, homodimer. It depends on Zn(2+) as a cofactor.

The catalysed reaction is Endonucleolytic cleavage of RNA, removing extra 3' nucleotides from tRNA precursor, generating 3' termini of tRNAs. A 3'-hydroxy group is left at the tRNA terminus and a 5'-phosphoryl group is left at the trailer molecule.. In terms of biological role, zinc phosphodiesterase, which displays some tRNA 3'-processing endonuclease activity. Probably involved in tRNA maturation, by removing a 3'-trailer from precursor tRNA. This Brevibacillus brevis (strain 47 / JCM 6285 / NBRC 100599) protein is Ribonuclease Z.